Reading from the N-terminus, the 147-residue chain is Hemoglobin subunit delta (147 aa).

Residues 3–147 enclose the Globin domain; the sequence is HLTPDEKNAV…VATALAHKYH (145 aa). Serine 51 is modified (phosphoserine). Residues histidine 64 and histidine 93 each coordinate heme b.

This sequence belongs to the globin family. Heterotetramer of two delta chains and two alpha chains. Red blood cells.

The sequence is that of Hemoglobin subunit delta (HBD) from Otolemur crassicaudatus (Brown greater galago).